A 349-amino-acid polypeptide reads, in one-letter code: PhoH-like protein (349 aa).

ATP is bound at residue 147-154; that stretch reads GPAGTGKT.

This sequence belongs to the PhoH family.

The protein localises to the cytoplasm. The protein is PhoH-like protein of Mycobacterium leprae (strain TN).